Here is a 198-residue protein sequence, read N- to C-terminus: Nuclear transcription factor Y subunit A-4 (198 aa).

The interval Met-1–Pro-47 is disordered. The segment covering Glu-7–Ser-23 has biased composition (basic and acidic residues). Polar residues predominate over residues Gln-24–Tyr-44. The Subunit association domain (SAD) signature appears at Phe-101–Asn-124. Residues Lys-131–Ala-156 constitute a DNA-binding region (NFYA/HAP2-type). Residues Glu-136–Ser-198 form a disordered region. Residues Ala-156 to Glu-166 show a composition bias toward basic and acidic residues.

It belongs to the NFYA/HAP2 subunit family. Heterotrimeric transcription factor composed of three components, NF-YA, NF-YB and NF-YC. NF-YB and NF-YC must interact and dimerize for NF-YA association and DNA binding. Expressed in stems, caulines, and senescent flowers.

It localises to the nucleus. Functionally, stimulates the transcription of various genes by recognizing and binding to a CCAAT motif in promoters. The polypeptide is Nuclear transcription factor Y subunit A-4 (NFYA4) (Arabidopsis thaliana (Mouse-ear cress)).